Reading from the N-terminus, the 140-residue chain is uncharacterized protein (140 aa).

N-linked (GlcNAc...) asparagine glycosylation is present at asparagine 36. Residues 91 to 107 (LFMSLIGLCVCYMNLVF) traverse the membrane as a helical segment. Polar residues predominate over residues 113–122 (QPSSSGSKGN). Residues 113–140 (QPSSSGSKGNTETTIETTTEVETETAKQ) are disordered. Residues 131 to 140 (TEVETETAKQ) show a composition bias toward acidic residues.

It is found in the endoplasmic reticulum membrane. This is an uncharacterized protein from Saccharomyces cerevisiae (strain ATCC 204508 / S288c) (Baker's yeast).